We begin with the raw amino-acid sequence, 244 residues long: MFKTLAADFRIIFERDPAARNGLEVLLCYPGFQALVCHRVAHWLYQQRLPVIPRLLSHLSRLLTGVEIHPGARLGQGIFIDHGMGVVIGETAIVGDYCLIYQGVTLGGTGKQSGKRHPTLANNVVVGAGAKVLGNIQIGENVRIGAGSVVLRDVPSDCTVVGIPGRVIYRSGVRVDPLDHSQMPDSEARVIRMLLDRIEALEDQLEGLNLPPAEEAIDVTLAPVGDRCQLRDRTIEEFLDGAGI.

It belongs to the transferase hexapeptide repeat family.

Its subcellular location is the cytoplasm. It carries out the reaction L-serine + acetyl-CoA = O-acetyl-L-serine + CoA. Its pathway is amino-acid biosynthesis; L-cysteine biosynthesis; L-cysteine from L-serine: step 1/2. The protein is Serine acetyltransferase (cysE) of Synechococcus elongatus (strain ATCC 33912 / PCC 7942 / FACHB-805) (Anacystis nidulans R2).